Reading from the N-terminus, the 58-residue chain is UPF0391 membrane protein Shew185_1413 (58 aa).

2 consecutive transmembrane segments (helical) span residues 6 to 26 (LVFL…IAGA) and 28 to 48 (AGIA…SLLI).

This sequence belongs to the UPF0391 family.

Its subcellular location is the cell membrane. The polypeptide is UPF0391 membrane protein Shew185_1413 (Shewanella baltica (strain OS185)).